The sequence spans 251 residues: Cell division protein ZapD (251 aa).

The protein belongs to the ZapD family. Interacts with FtsZ.

The protein resides in the cytoplasm. Cell division factor that enhances FtsZ-ring assembly. Directly interacts with FtsZ and promotes bundling of FtsZ protofilaments, with a reduction in FtsZ GTPase activity. The polypeptide is Cell division protein ZapD (Nitrosomonas eutropha (strain DSM 101675 / C91 / Nm57)).